Reading from the N-terminus, the 183-residue chain is uncharacterized protein (183 aa).

It belongs to the asfivirus S183L family.

This is an uncharacterized protein from African swine fever virus (isolate Pig/Kenya/KEN-50/1950) (ASFV).